The following is a 597-amino-acid chain: Kelch-like protein 21 (597 aa).

Residues 35-103 (LDVTLEAAGG…SYTGRVAVSG (69 aa)) enclose the BTB domain. Residues 138–239 (CLDMQDFAEA…RRFYLLAHVE (102 aa)) enclose the BACK domain. Kelch repeat units lie at residues 287 to 335 (ILVL…ALGN), 336 to 382 (DIYV…VLDG), 384 to 422 (LYVV…ACRG), 423 to 470 (RLYA…TLNG), 472 to 512 (MYFV…VLGG), and 513 to 560 (KLYV…SIFR). Positions 570-597 (GRGFELDSGSDDMDPGRPRPPRDPDELH) are disordered. Positions 583–597 (DPGRPRPPRDPDELH) are enriched in basic and acidic residues.

As to quaternary structure, component of the BCR(KLHL21) E3 ubiquitin ligase complex, at least composed of CUL3, KLHL21 and RBX1.

It localises to the cytoplasm. The protein localises to the cytoskeleton. The protein resides in the spindle. The protein operates within protein modification; protein ubiquitination. Functionally, substrate-specific adapter of a BCR (BTB-CUL3-RBX1) E3 ubiquitin-protein ligase complex required for efficient chromosome alignment and cytokinesis. The BCR(KLHL21) E3 ubiquitin ligase complex regulates localization of the chromosomal passenger complex (CPC) from chromosomes to the spindle midzone in anaphase and mediates the ubiquitination of AURKB. Ubiquitination of AURKB by BCR(KLHL21) E3 ubiquitin ligase complex may not lead to its degradation by the proteasome. The chain is Kelch-like protein 21 (KLHL21) from Homo sapiens (Human).